A 433-amino-acid chain; its full sequence is Poly(A) ribonuclease POP2 (433 aa).

At Met-1 the chain carries N-acetylmethionine. A disordered region spans residues Leu-78–Pro-98. The span at Gln-81–Gln-91 shows a compositional bias: low complexity. Residue Thr-97 is modified to Phosphothreonine; by YAK1. Residues Ser-188, Glu-190, Asp-310, and Gln-394 each coordinate a divalent metal cation.

It belongs to the CAF1 family. Subunit of the 1.0 MDa CCR4-NOT core complex that contains CCR4, CAF1, NOT1, NOT2, NOT3, NOT4, NOT5, CAF40 and CAF130. In the complex interacts with NOT1. The core complex probably is part of a less characterized 1.9 MDa CCR4-NOT complex. Mg(2+) is required as a cofactor.

The protein localises to the cytoplasm. The protein resides in the nucleus. It catalyses the reaction Exonucleolytic cleavage of poly(A) to 5'-AMP.. Functionally, acts as a probably catalytic component of the CCR4-NOT core complex, which in the nucleus seems to be a general transcription factor, and in the cytoplasm the major mRNA deadenylase involved in mRNA turnover. In vitro, POP2 has 3'-exoribonuclease activity with a preference for poly(A) RNAs, but also degrades poly(U) and poly(C) RNAs. Is part of a glucose-sensing system involved in growth control in response to glucose availability. The polypeptide is Poly(A) ribonuclease POP2 (POP2) (Saccharomyces cerevisiae (strain ATCC 204508 / S288c) (Baker's yeast)).